A 201-amino-acid chain; its full sequence is Peptide deformylase (201 aa).

Positions methionine 1–isoleucine 21 are disordered. Residues cysteine 121 and histidine 163 each coordinate Fe cation. The active site involves glutamate 164. Histidine 167 contacts Fe cation.

This sequence belongs to the polypeptide deformylase family. Fe(2+) serves as cofactor.

It catalyses the reaction N-terminal N-formyl-L-methionyl-[peptide] + H2O = N-terminal L-methionyl-[peptide] + formate. Removes the formyl group from the N-terminal Met of newly synthesized proteins. Requires at least a dipeptide for an efficient rate of reaction. N-terminal L-methionine is a prerequisite for activity but the enzyme has broad specificity at other positions. In Prochlorococcus marinus (strain AS9601), this protein is Peptide deformylase.